The primary structure comprises 295 residues: Probable CBASS effector molecule IK1_05631 (295 aa).

The next 4 helical transmembrane spans lie at 26 to 46, 56 to 76, 167 to 187, and 190 to 210; these read IFYA…ISIY, SNTG…AYQI, ILLF…GFFV, and SMQE…IYGF.

It localises to the cell membrane. In terms of biological role, effector protein of a CBASS antiviral system. CBASS (cyclic oligonucleotide-based antiphage signaling system) provides immunity against bacteriophage. The CD-NTase protein synthesizes cyclic nucleotides in response to infection; these serve as specific second messenger signals. The signals activate a diverse range of effectors, leading to bacterial cell death and thus abortive phage infection. A type I-B CBASS system. Its function is as follows. Protects B.subtilis against phage infection. When IK1_05630 and IK1_05631 are introduced in B.subtilis BEST7003 there is 1000-fold protection against phage SBSphiC. Both genes are required for protection. Activation leads to bacterial cell lysis and death, which occurs before the phage has finished its replication cycle, thus protecting non-infected bacteria by aborting the phage infection and preventing its propagation. The chain is Probable CBASS effector molecule IK1_05631 from Bacillus cereus (strain VD146).